We begin with the raw amino-acid sequence, 281 residues long: Translation initiation factor IF3-4, chloroplastic (281 aa).

A chloroplast-targeting transit peptide spans 1-51; it reads MAGITSTVGFNAILAGATKTVSHPVKSKLFGLRLCVPEFSIVSLSPYHHRR. Disordered regions lie at residues 63–86 and 253–281; these read GGGGSRFPGDRRGRQKESEDDDSL and KVQEPPPKKKKKPADDKVSAANITATQDI. 2 stretches are compositionally biased toward basic and acidic residues: residues 70–79 and 253–270; these read PGDRRGRQKE and KVQEPPPKKKKKPADDKV.

The protein belongs to the IF-3 family. As to quaternary structure, monomer.

It localises to the plastid. It is found in the chloroplast. Chloroplast translation initiation factor that is essential for the coordination of leaf and chloroplast development. IF-3 binds to the 30S ribosomal subunit and shifts the equilibrium between 70S ribosomes and their 50S and 30S subunits in favor of the free subunits, thus enhancing the availability of 30S subunits on which protein synthesis initiation begins. This Arabidopsis thaliana (Mouse-ear cress) protein is Translation initiation factor IF3-4, chloroplastic.